A 228-amino-acid chain; its full sequence is Probable ribosomal RNA small subunit methyltransferase A (228 aa).

S-adenosyl-L-methionine is bound by residues H9, L11, G34, E55, D78, and N93.

This sequence belongs to the class I-like SAM-binding methyltransferase superfamily. rRNA adenine N(6)-methyltransferase family. RsmA subfamily.

The protein resides in the cytoplasm. Functionally, specifically dimethylates two adjacent adenosines in the loop of a conserved hairpin near the 3'-end of 16S rRNA in the 30S particle. May play a critical role in biogenesis of 30S subunits. This Pyrobaculum aerophilum (strain ATCC 51768 / DSM 7523 / JCM 9630 / CIP 104966 / NBRC 100827 / IM2) protein is Probable ribosomal RNA small subunit methyltransferase A.